The primary structure comprises 390 residues: Branched-chain-amino-acid aminotransferase (390 aa).

Position 225 is an N6-(pyridoxal phosphate)lysine (lysine 225).

It belongs to the class-IV pyridoxal-phosphate-dependent aminotransferase family. Homodimer. Pyridoxal 5'-phosphate serves as cofactor.

It catalyses the reaction L-leucine + 2-oxoglutarate = 4-methyl-2-oxopentanoate + L-glutamate. The enzyme catalyses L-isoleucine + 2-oxoglutarate = (S)-3-methyl-2-oxopentanoate + L-glutamate. The catalysed reaction is L-valine + 2-oxoglutarate = 3-methyl-2-oxobutanoate + L-glutamate. In terms of biological role, catalyzes the first reaction in the catabolism of the essential branched chain amino acids leucine, isoleucine, and valine. The chain is Branched-chain-amino-acid aminotransferase from Monosiga brevicollis (Choanoflagellate).